The sequence spans 136 residues: Heavy metal-associated isoprenylated plant protein 19 (136 aa).

In terms of domain architecture, HMA spans 13–77 (YMDVEFNVSM…LKKKTGKRVK (65 aa)). Residues Cys24 and Cys27 each coordinate a metal cation. A Cysteine methyl ester modification is found at Cys133. Residue Cys133 is the site of S-farnesyl cysteine attachment. The propeptide at 134–136 (SIS) is removed in mature form.

The protein belongs to the HIPP family.

In terms of biological role, heavy-metal-binding protein. In Arabidopsis thaliana (Mouse-ear cress), this protein is Heavy metal-associated isoprenylated plant protein 19.